A 403-amino-acid polypeptide reads, in one-letter code: Acetate kinase (403 aa).

Asn-8 contacts Mg(2+). Lys-15 is a binding site for ATP. Substrate is bound at residue Arg-90. Asp-147 serves as the catalytic Proton donor/acceptor. ATP contacts are provided by residues 207–211 (HLGSG), 282–284 (DLR), and 330–334 (GVGEN). Residue Glu-384 coordinates Mg(2+).

This sequence belongs to the acetokinase family. Homodimer. Mg(2+) serves as cofactor. The cofactor is Mn(2+).

Its subcellular location is the cytoplasm. It carries out the reaction acetate + ATP = acetyl phosphate + ADP. It functions in the pathway metabolic intermediate biosynthesis; acetyl-CoA biosynthesis; acetyl-CoA from acetate: step 1/2. In terms of biological role, catalyzes the formation of acetyl phosphate from acetate and ATP. Can also catalyze the reverse reaction. The protein is Acetate kinase of Exiguobacterium sp. (strain ATCC BAA-1283 / AT1b).